Here is a 513-residue protein sequence, read N- to C-terminus: MITSPLLAYVAILFFCVLKASSLDTFIAAVYEHAAILPDAPLTPVSHEEALMLMNRNLDLLEGAVTSAAKQGAHIIVTPEDGVYGFFFSRESIYSYLEDIPDPHVNWIPCTNPSRFGHTPVQKRLSCLARDNSIYIVANIGDKKPCNASDPDCPHDGRYQYNTDVVFDSEGRLVARYHKQNLFLGEDQFDAPKEPEIVTFDTTFGRFGIFTCFGILFHDPAVTLVKDFQVDTILFPTAWMNVLPHLTAIEFHSAWAMGMRVNFLAANIHFPLRKMTGSGIYAPDSPRAFHYDMKTKEGKLLLSQLDSHPHRPAVNWTSYASGLPTPLVGNQEFKSTVFFDEFTFLELKGVAGNYTVCQKDLCCQLSYRMLEKREDEVYALGAFDGLHTVEGSYYLQICTLLKCKTMDLHSCGDSVETASTRFEMFSLSGTFGTQYVFPEVLLSDIQLAPGEFQVSSDGRLFSLKPPSGPVLTVTLFGRLYERDSASGASADLVAQGLRVMLGVIITIMYSLSW.

Residues M1 to S22 form the signal peptide. The CN hydrolase domain occupies A40–S307. The active-site Proton acceptor is E80. A glycan (N-linked (GlcNAc...) asparagine) is linked at N147. K179 acts as the Proton donor in catalysis. The Nucleophile role is filled by C212. Residues N315 and N353 are each glycosylated (N-linked (GlcNAc...) asparagine). Residue G487 is the site of GPI-anchor amidated glycine attachment. A propeptide spans A488–W513 (removed in mature form).

It belongs to the carbon-nitrogen hydrolase superfamily. BTD/VNN family. Monomer. Detected in kidney (at protein level).

Its subcellular location is the cell membrane. It catalyses the reaction (R)-pantetheine + H2O = cysteamine + (R)-pantothenate. Amidohydrolase that hydrolyzes specifically one of the carboamide linkages in D-pantetheine thus recycling pantothenic acid (vitamin B5) and releasing cysteamine. This Sus scrofa (Pig) protein is Pantetheinase (VNN1).